A 486-amino-acid polypeptide reads, in one-letter code: Phosphomethylpyrimidine synthase (486 aa).

Residues asparagine 80, methionine 109, tyrosine 139, histidine 175, 195–197 (SRG), 236–239 (DSLR), and glutamate 275 contribute to the substrate site. Histidine 279 contributes to the Zn(2+) binding site. Residue tyrosine 329 coordinates substrate. Residue histidine 370 coordinates Zn(2+). Residues cysteine 450, cysteine 453, and cysteine 458 each contribute to the [4Fe-4S] cluster site.

Belongs to the ThiC family. The cofactor is [4Fe-4S] cluster.

The catalysed reaction is 5-amino-1-(5-phospho-beta-D-ribosyl)imidazole + S-adenosyl-L-methionine = 4-amino-2-methyl-5-(phosphooxymethyl)pyrimidine + CO + 5'-deoxyadenosine + formate + L-methionine + 3 H(+). It participates in cofactor biosynthesis; thiamine diphosphate biosynthesis. In terms of biological role, catalyzes the synthesis of the hydroxymethylpyrimidine phosphate (HMP-P) moiety of thiamine from aminoimidazole ribotide (AIR) in a radical S-adenosyl-L-methionine (SAM)-dependent reaction. The polypeptide is Phosphomethylpyrimidine synthase (Trichodesmium erythraeum (strain IMS101)).